Consider the following 153-residue polypeptide: Insulin-like growth factor 1.S (153 aa).

Intrachain disulfides connect Cys29–Cys38, Cys54–Cys96, Cys66–Cys109, and Cys100–Cys109. The segment at 49–77 (GPETLCGAELVDTLQFVCGDRGFYFSKPT) is b. The interval 78–89 (GYGSNNRRSHHR) is c. An a region spans residues 90–110 (GIVDECCFQSCDFRRLEMYCA). Residues 111–118 (PAKQAKSA) form a d region. Positions 119-153 (RSVRTQRHTDMPKAQKEVHPKNTSRGNTGSRGFRM) are cleaved as a propeptide — e peptide. The disordered stretch occupies residues 119–153 (RSVRTQRHTDMPKAQKEVHPKNTSRGNTGSRGFRM). Positions 125–138 (RHTDMPKAQKEVHP) are enriched in basic and acidic residues. A compositionally biased stretch (polar residues) spans 139 to 153 (KNTSRGNTGSRGFRM).

This sequence belongs to the insulin family. As to expression, expressed in adult liver, lung, heart, kidney and peritoneal fat.

Its subcellular location is the secreted. In terms of biological role, the insulin-like growth factors, isolated from plasma, are structurally and functionally related to insulin but have a much higher growth-promoting activity. Promotes head development by inhibiting Wnt signaling during embryogenesis. Acts as a ligand for IGF1R. Binds to the alpha subunit of IGF1R, leading to the activation of the intrinsic tyrosine kinase activity which autophosphorylates tyrosine residues in the beta subunit thus initiatiating a cascade of down-stream signaling events leading to activation of the PI3K-AKT/PKB and the Ras-MAPK pathways. Binds to integrins. Its binding to integrins and subsequent ternary complex formation with integrins and IGFR1 are essential for IGF1 signaling. This is Insulin-like growth factor 1.S from Xenopus laevis (African clawed frog).